The following is a 173-amino-acid chain: MIAQEREARINGEITAKEVRLISESGEQLGVVSVREALAMAEGQDVDLVEISPTAKPPVCKLMDYGKYKYQQAKKRDEAKKNQKQVQIKEIKFRPGTDEGDYQIKMRNINRFLADGDKVKVTLRFRGREMAHQQLGAQLLERVKEDLAEVAQIESFPKMEGRQMVMMIAPKKK.

This sequence belongs to the IF-3 family. In terms of assembly, monomer.

It is found in the cytoplasm. Its function is as follows. IF-3 binds to the 30S ribosomal subunit and shifts the equilibrium between 70S ribosomes and their 50S and 30S subunits in favor of the free subunits, thus enhancing the availability of 30S subunits on which protein synthesis initiation begins. The chain is Translation initiation factor IF-3 from Neisseria gonorrhoeae (strain ATCC 700825 / FA 1090).